A 344-amino-acid chain; its full sequence is HTH-type transcriptional regulator MalR (344 aa).

An HTH lacI-type domain is found at 1 to 54 (MTTRLADIAAQAGVSEATVSRVLNGKPGVAATTRQSVLAALDVLGYERPVRLRQ). Residues 5 to 24 (LADIAAQAGVSEATVSRVLN) constitute a DNA-binding region (H-T-H motif).

In terms of biological role, transcriptional repressor of the maltosaccharide utilization operon malEFG. The sequence is that of HTH-type transcriptional regulator MalR (malR) from Streptomyces coelicolor (strain ATCC BAA-471 / A3(2) / M145).